A 725-amino-acid chain; its full sequence is MPVSTRSKVMKQERNEQENTNLNLPLRNPHQGLKEKMRALTLLYEQQKRASFSLRNPNHNQSPKPEDQRFKTQLLDSSKKGDRFHRLDGKDSTFVEEDTKENNVFEADRIFGVSSVPVKPSGVIRKLSMGNGARNVSEAEKLESLNASVSRILVFVRLRPMGKKERENGSRCCVKVLNKRDVYLTEFTNENDYLRLKRLRVRHFTFDSSFPETTTQQEVYSTTTGDLVEAVLEGRNGSVFCYGATGAGKTYTMLGTMENPGVMVLAIKDLFAKVRQRSLDGNHVVHLSYLEVYNETVRDLLSPGRPLILREDKQGIVAAGLTQYRAYSTDEVMALLQRGNQNRTTEPTRCNETSSRSHAILQVIVEYKTRDASMNIISRVGKLSLIDLAGSERALATDQRTLRSLEGANINRSLLALSSCINALVEGKKHIPYRNSKLTQLLKDSLGGSCNTVMIANISPSSQSFGETQNTLHWADRAKEIRVKECEVNEEVVQVGEEEGADQAKLLLELQKENSELRVQLAKQQQKLLTLQAENIAAANNNNNISLTPPSISSLMTPPSALTAQQKKKPRHSLLSGTCFTPESLKRTKAEEAVKELQLTVKALKMEMERMKREHGLQMKKQKDELMKDLCSRKSEKTPERCKETRRIVTRGSLRPKEKEKELKSPSHRFASPVAAAKKRSFWDITVANTSPALDRRKTRSHGLVHQEAPSKLLQPGFARPHMKH.

The interval 1 to 32 (MPVSTRSKVMKQERNEQENTNLNLPLRNPHQG) is disordered. A Kinesin motor domain is found at 151 to 481 (RILVFVRLRP…LHWADRAKEI (331 aa)). Residue 243-250 (GATGAGKT) participates in ATP binding. Coiled coils occupy residues 499–541 (EGAD…AANN) and 583–617 (ESLKRTKAEEAVKELQLTVKALKMEMERMKREHGL). 2 disordered regions span residues 652–672 (GSLRPKEKEKELKSPSHRFAS) and 691–725 (SPALDRRKTRSHGLVHQEAPSKLLQPGFARPHMKH). The segment covering 655–665 (RPKEKEKELKS) has biased composition (basic and acidic residues).

It belongs to the TRAFAC class myosin-kinesin ATPase superfamily. Kinesin family. KIN-8 subfamily.

This Arabidopsis thaliana (Mouse-ear cress) protein is Kinesin-like protein KIN-8A.